Here is a 351-residue protein sequence, read N- to C-terminus: MSILLIDLSSQELRQEEIELLEHPLVAGLILFSRNFYDIEQIRHLIRSVRQKVKKPLLITVDQEGGRVQRFRQGFTQLPAMQSFACLLSDPQEQQEMAWRAGWQMAAEMTALDIDLSFAPVLDLGHQCKAIGDRSFHYEEKKLIELAEKFIQGMRQIGMSATGKHFPGHGHVLADSHLETPYDDRAKELIFAQDIRPFQSLIKQGLLDAVMPAHVIYTQCDNQPASGSSYWLKEVLRQQLGFQGAIFSDDLGMKGAGFMGDFVARCTQSLQAGCDLLLLCNEPEAVVQVLDRFKPQESQNKRIIRQTRLNKLFKKQRIDWQTLRNQRDWLENHKKLTALQQDWLAYKGYDN.

Substrate is bound by residues Asp62, Arg70, Arg134, and 164-165 (KH). The Proton donor/acceptor role is filled by His177. The active-site Nucleophile is Asp249.

It belongs to the glycosyl hydrolase 3 family. NagZ subfamily.

It is found in the cytoplasm. The catalysed reaction is Hydrolysis of terminal non-reducing N-acetyl-D-hexosamine residues in N-acetyl-beta-D-hexosaminides.. It functions in the pathway cell wall biogenesis; peptidoglycan recycling. In terms of biological role, plays a role in peptidoglycan recycling by cleaving the terminal beta-1,4-linked N-acetylglucosamine (GlcNAc) from peptide-linked peptidoglycan fragments, giving rise to free GlcNAc, anhydro-N-acetylmuramic acid and anhydro-N-acetylmuramic acid-linked peptides. The protein is Beta-hexosaminidase of Histophilus somni (strain 129Pt) (Haemophilus somnus).